The chain runs to 240 residues: Mitochondrial transcription rescue factor 1 (240 aa).

The transit peptide at 1 to 84 (MAMASVKLLA…ECIFPFSVRL (84 aa)) directs the protein to the mitochondrion. Positions 95 to 127 (KKSLQKVDEEDSDEESHHDEMSEQEEELEDDPT) are disordered. Phosphoserine is present on residues serine 106 and serine 116. Over residues 116–126 (SEQEEELEDDP) the composition is skewed to acidic residues. Residues 142–217 (FRYDVVLKTG…LKKVFEEKTE (76 aa)) form the S4 RNA-binding domain.

Monomer. Interacts with POLRMT. Interacts (via S4 domain) with MTRFR (via C-terminus). Associates with mitoribosomal S39 large subunit, peptidyl tRNA and nascent chain.

It is found in the mitochondrion matrix. In terms of biological role, mitochondrial RNA-binding protein involved in mitochondrial transcription regulation. Functions as a protective factor to maintain proper mitochondrial RNA level during stress. Acts at the transcription level and its protective function depends on its RNA binding ability. Part of a mitoribosome-associated quality control pathway that prevents aberrant translation by responding to interruptions during elongation. As heterodimer with MTRF, ejects the unfinished nascent chain and peptidyl transfer RNA (tRNA), respectively, from stalled ribosomes. Recruitment of mitoribosome biogenesis factors to these quality control intermediates suggests additional roles for MTRES1 and MTRF during mitoribosome rescue. The chain is Mitochondrial transcription rescue factor 1 from Homo sapiens (Human).